Here is a 178-residue protein sequence, read N- to C-terminus: Putative peroxiredoxin in rubredoxin operon (178 aa).

The region spanning 3 to 163 is the Thioredoxin domain; it reads RLVGKPAPEF…TLRVLKAFQT (161 aa). The active-site Cysteine sulfenic acid (-SOH) intermediate is the C50.

It belongs to the peroxiredoxin family. AhpC/Prx1 subfamily. In terms of assembly, homodimer; disulfide-linked, upon oxidation.

Its subcellular location is the cytoplasm. The enzyme catalyses a hydroperoxide + [protein]-dithiol = [protein]-disulfide + an alcohol + H2O. Its function is as follows. Thiol-specific peroxidase that catalyzes the reduction of hydrogen peroxide and organic hydroperoxides to water and alcohols, respectively. Plays a role in cell protection against oxidative stress by detoxifying peroxides. This chain is Putative peroxiredoxin in rubredoxin operon, found in Clostridium pasteurianum.